We begin with the raw amino-acid sequence, 149 residues long: Large ribosomal subunit protein uL22c (149 aa).

This sequence belongs to the universal ribosomal protein uL22 family. In terms of assembly, part of the 50S ribosomal subunit.

It is found in the plastid. The protein resides in the chloroplast. Its function is as follows. This protein binds specifically to 23S rRNA. The globular domain of the protein is located near the polypeptide exit tunnel on the outside of the subunit, while an extended beta-hairpin is found that lines the wall of the exit tunnel in the center of the 70S ribosome. The polypeptide is Large ribosomal subunit protein uL22c (rpl22) (Brachypodium distachyon (Purple false brome)).